Reading from the N-terminus, the 138-residue chain is Small ribosomal subunit protein uS11c (138 aa).

Belongs to the universal ribosomal protein uS11 family. As to quaternary structure, part of the 30S ribosomal subunit.

It is found in the plastid. It localises to the chloroplast. This chain is Small ribosomal subunit protein uS11c, found in Phaseolus vulgaris (Kidney bean).